Here is a 321-residue protein sequence, read N- to C-terminus: Mas-related G-protein coupled receptor member D (321 aa).

Over 1 to 8 (MNSTLDSS) the chain is Extracellular. N2 carries N-linked (GlcNAc...) asparagine glycosylation. The chain crosses the membrane as a helical span at residues 9 to 29 (PAPGLTISPTMDLVTWIYFSV). A topological domain (cytoplasmic) is located at residue T30. The chain crosses the membrane as a helical span at residues 31–51 (FLAMATCVGGMAGNSLVIWLL). Residues 52–72 (SCNGMQRSPFCVYVLNLAVAD) are Extracellular-facing. The helical transmembrane segment at 73–93 (FLFLFCMASMLSLETGPLLIV) threads the bilayer. Over 94–146 (NISAKIYEGMRRIKYFAYTAGLSLLTAISTQRCLSVLFPIWYKCHRPRHLSSV) the chain is Cytoplasmic. The chain crosses the membrane as a helical span at residues 147 to 167 (VSGALWALAFLMNFLASFFCV). At 168-181 (QFWHPNKHQCFKVD) the chain is on the extracellular side. The helical transmembrane segment at 182 to 202 (IVFNSLILGIFMPVMILTSTI) threads the bilayer. The Cytoplasmic segment spans residues 203 to 220 (LFIRVRKNSLMQRRRPRR). A helical transmembrane segment spans residues 221-241 (LYVVILTSILVFLTCSLPLGI). Over 242–260 (NWFLLYWVDVKRDVRLLYS) the chain is Extracellular. The helical transmembrane segment at 261-281 (CVSRFSSSLSSSANPVIYFLV) threads the bilayer. The Cytoplasmic portion of the chain corresponds to 282-321 (GSQKSHRLQESLGAVLGRALRDEPEPEGRETPSTCTNDGV). The segment covering 302–311 (RDEPEPEGRE) has biased composition (basic and acidic residues). The segment at 302-321 (RDEPEPEGRETPSTCTNDGV) is disordered. Polar residues predominate over residues 312–321 (TPSTCTNDGV).

Belongs to the G-protein coupled receptor 1 family. Mas subfamily. In terms of tissue distribution, expressed in a subset of sensory neurons that includes nociceptors. Expressed in the subclass of non-peptidergic sensory neurons that are IB4(+) and VR1(-).

It is found in the cell membrane. In terms of biological role, may regulate nociceptor function and/or development, including the sensation or modulation of pain. Functions as a specific membrane receptor for beta-alanine. The receptor couples with G-protein G(q) and G(i). This chain is Mas-related G-protein coupled receptor member D (Mrgprd), found in Mus musculus (Mouse).